The chain runs to 134 residues: Profilin-3 (134 aa).

The cysteines at positions 13 and 118 are disulfide-linked. The Involved in PIP2 interaction signature appears at 84-100 (AVIRGKKGSGGITIKKT). At T114 the chain carries Phosphothreonine.

It belongs to the profilin family. Occurs in many kinds of cells as a complex with monomeric actin in a 1:1 ratio. In terms of processing, phosphorylated by MAP kinases.

The protein resides in the cytoplasm. Its subcellular location is the cytoskeleton. Its function is as follows. Binds to actin and affects the structure of the cytoskeleton. At high concentrations, profilin prevents the polymerization of actin, whereas it enhances it at low concentrations. The polypeptide is Profilin-3 (Olea europaea (Common olive)).